Consider the following 225-residue polypeptide: Peptidyl-tRNA hydrolase (225 aa).

Tyr-14 is a tRNA binding site. The Proton acceptor role is filled by His-19. TRNA-binding residues include Phe-64, Asn-66, and Asn-112. The disordered stretch occupies residues 182–225; it reads AVALRMQPPKPEKPKPAAKAPEAQAPEAAPDERSALQKLADRFR. The segment covering 198–209 has biased composition (low complexity); the sequence is AAKAPEAQAPEA. Residues 211–225 show a composition bias toward basic and acidic residues; that stretch reads PDERSALQKLADRFR.

This sequence belongs to the PTH family. In terms of assembly, monomer.

Its subcellular location is the cytoplasm. The enzyme catalyses an N-acyl-L-alpha-aminoacyl-tRNA + H2O = an N-acyl-L-amino acid + a tRNA + H(+). Its function is as follows. Hydrolyzes ribosome-free peptidyl-tRNAs (with 1 or more amino acids incorporated), which drop off the ribosome during protein synthesis, or as a result of ribosome stalling. Functionally, catalyzes the release of premature peptidyl moieties from peptidyl-tRNA molecules trapped in stalled 50S ribosomal subunits, and thus maintains levels of free tRNAs and 50S ribosomes. The polypeptide is Peptidyl-tRNA hydrolase (Cereibacter sphaeroides (strain ATCC 17029 / ATH 2.4.9) (Rhodobacter sphaeroides)).